A 275-amino-acid polypeptide reads, in one-letter code: MSQQLQSLIEQAWEDRANLSPKAAPNDVRAAVANVIDQLDQGALRVAEKKDGQWIVNQWVKKAVLLSFRLEDNAPMTAGGFTHFYDKVPSKFASYTADDFARGGFRVVPPAVARRGSFIGKNAVLMPSYVNIGAYVDEGTMVDTWATVGSCAQIGKNVHLSGGVGIGGVLEPLQANPVIIEDNCFIGARSEVVEGVIVEENSVISMGVYLGQSTKIYDRETGEVHYGRVPAGSVVVPGNLPSKDGTYSLYCAVIVKKVDAQTRAKTSLNELLRGD.

The substrate site is built by Arg-106 and Asp-143.

Belongs to the transferase hexapeptide repeat family. In terms of assembly, homotrimer.

It is found in the cytoplasm. The enzyme catalyses (S)-2,3,4,5-tetrahydrodipicolinate + succinyl-CoA + H2O = (S)-2-succinylamino-6-oxoheptanedioate + CoA. The protein operates within amino-acid biosynthesis; L-lysine biosynthesis via DAP pathway; LL-2,6-diaminopimelate from (S)-tetrahydrodipicolinate (succinylase route): step 1/3. In Ralstonia nicotianae (strain ATCC BAA-1114 / GMI1000) (Ralstonia solanacearum), this protein is 2,3,4,5-tetrahydropyridine-2,6-dicarboxylate N-succinyltransferase.